The sequence spans 487 residues: Steroid 21-hydroxylase (487 aa).

2 residues coordinate heme b: Arg92 and Lys117. Arg228 lines the 17alpha-hydroxyprogesterone pocket. Arg228 lines the progesterone pocket. His357, Arg418, and Cys420 together coordinate heme b.

Belongs to the cytochrome P450 family. Heme b is required as a cofactor.

Its subcellular location is the endoplasmic reticulum membrane. It is found in the microsome membrane. It carries out the reaction progesterone + reduced [NADPH--hemoprotein reductase] + O2 = 21-hydroxyprogesterone + oxidized [NADPH--hemoprotein reductase] + H2O + H(+). The enzyme catalyses 17alpha-hydroxyprogesterone + reduced [NADPH--hemoprotein reductase] + O2 = 11-deoxycortisol + oxidized [NADPH--hemoprotein reductase] + H2O + H(+). A cytochrome P450 monooxygenase that plays a major role in adrenal steroidogenesis. Catalyzes the hydroxylation at C-21 of progesterone and 17alpha-hydroxyprogesterone to respectively form 11-deoxycorticosterone and 11-deoxycortisol, intermediate metabolites in the biosynthetic pathway of mineralocorticoids and glucocorticoids. Mechanistically, uses molecular oxygen inserting one oxygen atom into a substrate, and reducing the second into a water molecule, with two electrons provided by NADPH via cytochrome P450 reductase (CPR; NADPH-ferrihemoprotein reductase). This is Steroid 21-hydroxylase (Cyp21) from Mus musculus (Mouse).